The following is a 167-amino-acid chain: MSKQELEIKTYVSDLLQERAELFLVDIAFSGTHSRRKILVILDKDSGILIDECGEFSRALGNLIEENNLFGDNAYVLEVSSPGMDRPLLVSRQYKRRIGNTLSFLLNDGTQFDAVLESVSEEGVVVMPAPQKVKKSNKKEAVVDVAIEPRKLRFEEIKKCNLIVSFK.

Belongs to the RimP family.

It localises to the cytoplasm. Its function is as follows. Required for maturation of 30S ribosomal subunits. The chain is Ribosome maturation factor RimP from Cytophaga hutchinsonii (strain ATCC 33406 / DSM 1761 / CIP 103989 / NBRC 15051 / NCIMB 9469 / D465).